Here is a 334-residue protein sequence, read N- to C-terminus: Large ribosomal subunit protein uL3 (334 aa).

Residues 1–10 (MGMKKNRPRR) show a composition bias toward basic residues. Positions 1–21 (MGMKKNRPRRGSLAFSPRKRA) are disordered.

Belongs to the universal ribosomal protein uL3 family. As to quaternary structure, part of the 50S ribosomal subunit. Forms a cluster with proteins L14 and L24e.

In terms of biological role, one of the primary rRNA binding proteins, it binds directly near the 3'-end of the 23S rRNA, where it nucleates assembly of the 50S subunit. In Methanococcus maripaludis (strain C5 / ATCC BAA-1333), this protein is Large ribosomal subunit protein uL3.